A 396-amino-acid polypeptide reads, in one-letter code: Elongation factor Tu (396 aa).

One can recognise a tr-type G domain in the interval 10 to 206 (KPHVNIGTIG…AVDESVPDPI (197 aa)). Residues 19–26 (GHVDHGKT) are G1. 19 to 26 (GHVDHGKT) contributes to the GTP binding site. T26 provides a ligand contact to Mg(2+). The segment at 62–66 (GITIN) is G2. Positions 83–86 (DAPG) are G3. Residues 83–87 (DAPGH) and 138–141 (NKSD) each bind GTP. Positions 138 to 141 (NKSD) are G4. Positions 176–178 (SGL) are G5.

The protein belongs to the TRAFAC class translation factor GTPase superfamily. Classic translation factor GTPase family. EF-Tu/EF-1A subfamily. Monomer.

The protein resides in the cytoplasm. It carries out the reaction GTP + H2O = GDP + phosphate + H(+). GTP hydrolase that promotes the GTP-dependent binding of aminoacyl-tRNA to the A-site of ribosomes during protein biosynthesis. This is Elongation factor Tu from Renibacterium salmoninarum (strain ATCC 33209 / DSM 20767 / JCM 11484 / NBRC 15589 / NCIMB 2235).